The following is a 241-amino-acid chain: tRNA (guanine-N(1)-)-methyltransferase (241 aa).

Residues Gly112 and Leu131–Leu136 contribute to the S-adenosyl-L-methionine site.

The protein belongs to the RNA methyltransferase TrmD family. As to quaternary structure, homodimer.

The protein localises to the cytoplasm. The catalysed reaction is guanosine(37) in tRNA + S-adenosyl-L-methionine = N(1)-methylguanosine(37) in tRNA + S-adenosyl-L-homocysteine + H(+). Functionally, specifically methylates guanosine-37 in various tRNAs. The sequence is that of tRNA (guanine-N(1)-)-methyltransferase from Clostridium novyi (strain NT).